The chain runs to 463 residues: Type I restriction enzyme StySPI specificity subunit (463 aa).

This sequence belongs to the type-I restriction system S methylase family. In terms of assembly, the type I restriction/modification system is composed of three polypeptides R, M and S; the restriction enzyme has stoichiometry R(2)M(2)S(1) while the methyltransferase is M(2)S(1).

In terms of biological role, the specificity (S) subunit of a type I restriction enzyme; this subunit dictates DNA sequence specificity. The M and S subunits together form a methyltransferase (MTase) that methylates A-2 on the top strand and A-3 on the bottom strand of the sequence 5'-AACN(6)GTRC-3'. In the presence of the R subunit the complex can also act as an endonuclease, binding to the same target sequence but cutting the DNA some distance from this site. Whether the DNA is cut or modified depends on the methylation state of the target sequence. When the target site is unmodified, the DNA is cut. When the target site is hemimethylated, the complex acts as a maintenance MTase modifying the DNA so that both strands become methylated. After locating a non-methylated recognition site, the enzyme complex serves as a molecular motor that translocates DNA in an ATP-dependent manner until a collision occurs that triggers cleavage. The sequence is that of Type I restriction enzyme StySPI specificity subunit from Salmonella potsdam.